We begin with the raw amino-acid sequence, 348 residues long: Protein RecA (348 aa).

Position 66 to 73 (66 to 73 (GPESSGKT)) interacts with ATP.

This sequence belongs to the RecA family.

The protein resides in the cytoplasm. Can catalyze the hydrolysis of ATP in the presence of single-stranded DNA, the ATP-dependent uptake of single-stranded DNA by duplex DNA, and the ATP-dependent hybridization of homologous single-stranded DNAs. It interacts with LexA causing its activation and leading to its autocatalytic cleavage. This is Protein RecA from Legionella pneumophila.